The primary structure comprises 863 residues: Glycogen phosphorylase (863 aa).

An N6-(pyridoxal phosphate)lysine modification is found at Lys-618.

This sequence belongs to the glycogen phosphorylase family. The cofactor is pyridoxal 5'-phosphate.

The enzyme catalyses [(1-&gt;4)-alpha-D-glucosyl](n) + phosphate = [(1-&gt;4)-alpha-D-glucosyl](n-1) + alpha-D-glucose 1-phosphate. Functionally, phosphorylase is an important allosteric enzyme in carbohydrate metabolism. Enzymes from different sources differ in their regulatory mechanisms and in their natural substrates. However, all known phosphorylases share catalytic and structural properties. The protein is Glycogen phosphorylase (glgP) of Mycobacterium tuberculosis (strain CDC 1551 / Oshkosh).